We begin with the raw amino-acid sequence, 123 residues long: Ribonuclease P protein component 2 (123 aa).

Belongs to the eukaryotic/archaeal RNase P protein component 2 family. In terms of assembly, consists of a catalytic RNA component and at least 4 protein subunits.

It carries out the reaction Endonucleolytic cleavage of RNA, removing 5'-extranucleotides from tRNA precursor.. In terms of biological role, part of ribonuclease P, a protein complex that generates mature tRNA molecules by cleaving their 5'-ends. This is Ribonuclease P protein component 2 from Aeropyrum pernix (strain ATCC 700893 / DSM 11879 / JCM 9820 / NBRC 100138 / K1).